Consider the following 346-residue polypeptide: Phosphoribosylformylglycinamidine cyclo-ligase (346 aa).

The protein belongs to the AIR synthase family.

Its subcellular location is the cytoplasm. The enzyme catalyses 2-formamido-N(1)-(5-O-phospho-beta-D-ribosyl)acetamidine + ATP = 5-amino-1-(5-phospho-beta-D-ribosyl)imidazole + ADP + phosphate + H(+). It participates in purine metabolism; IMP biosynthesis via de novo pathway; 5-amino-1-(5-phospho-D-ribosyl)imidazole from N(2)-formyl-N(1)-(5-phospho-D-ribosyl)glycinamide: step 2/2. In Synechococcus sp. (strain CC9311), this protein is Phosphoribosylformylglycinamidine cyclo-ligase.